Reading from the N-terminus, the 450-residue chain is UDP-N-acetylmuramoylalanine--D-glutamate ligase (450 aa).

119–125 (GSNGKTT) provides a ligand contact to ATP.

The protein belongs to the MurCDEF family.

Its subcellular location is the cytoplasm. It catalyses the reaction UDP-N-acetyl-alpha-D-muramoyl-L-alanine + D-glutamate + ATP = UDP-N-acetyl-alpha-D-muramoyl-L-alanyl-D-glutamate + ADP + phosphate + H(+). The protein operates within cell wall biogenesis; peptidoglycan biosynthesis. In terms of biological role, cell wall formation. Catalyzes the addition of glutamate to the nucleotide precursor UDP-N-acetylmuramoyl-L-alanine (UMA). The polypeptide is UDP-N-acetylmuramoylalanine--D-glutamate ligase (Bacillus mycoides (strain KBAB4) (Bacillus weihenstephanensis)).